A 471-amino-acid chain; its full sequence is Tryptophanase (471 aa).

3 positions are modified to N6-acetyllysine: K5, K115, and K156. K270 carries the post-translational modification N6-(pyridoxal phosphate)lysine. K450 bears the N6-acetyllysine mark.

This sequence belongs to the beta-eliminating lyase family. Homotetramer. The cofactor is pyridoxal 5'-phosphate.

It catalyses the reaction L-tryptophan + H2O = indole + pyruvate + NH4(+). Its pathway is amino-acid degradation; L-tryptophan degradation via pyruvate pathway; indole and pyruvate from L-tryptophan: step 1/1. In Shigella boydii serotype 18 (strain CDC 3083-94 / BS512), this protein is Tryptophanase.